A 319-amino-acid chain; its full sequence is Beta-ketoacyl-[acyl-carrier-protein] synthase III (319 aa).

Active-site residues include cysteine 112 and histidine 246. An ACP-binding region spans residues 247-251 (QANFR). Residue asparagine 276 is part of the active site.

Belongs to the thiolase-like superfamily. FabH family. In terms of assembly, homodimer.

The protein resides in the cytoplasm. It carries out the reaction malonyl-[ACP] + acetyl-CoA + H(+) = 3-oxobutanoyl-[ACP] + CO2 + CoA. Its pathway is lipid metabolism; fatty acid biosynthesis. Catalyzes the condensation reaction of fatty acid synthesis by the addition to an acyl acceptor of two carbons from malonyl-ACP. Catalyzes the first condensation reaction which initiates fatty acid synthesis and may therefore play a role in governing the total rate of fatty acid production. Possesses both acetoacetyl-ACP synthase and acetyl transacylase activities. Its substrate specificity determines the biosynthesis of branched-chain and/or straight-chain of fatty acids. The polypeptide is Beta-ketoacyl-[acyl-carrier-protein] synthase III (Shewanella oneidensis (strain ATCC 700550 / JCM 31522 / CIP 106686 / LMG 19005 / NCIMB 14063 / MR-1)).